We begin with the raw amino-acid sequence, 481 residues long: ATP synthase subunit beta, chloroplastic (481 aa).

Gly162–Thr169 contacts ATP.

Belongs to the ATPase alpha/beta chains family. In terms of assembly, F-type ATPases have 2 components, CF(1) - the catalytic core - and CF(0) - the membrane proton channel. CF(1) has five subunits: alpha(3), beta(3), gamma(1), delta(1), epsilon(1). CF(0) has four main subunits: a(1), b(1), b'(1) and c(9-12).

Its subcellular location is the plastid. It is found in the chloroplast thylakoid membrane. It catalyses the reaction ATP + H2O + 4 H(+)(in) = ADP + phosphate + 5 H(+)(out). In terms of biological role, produces ATP from ADP in the presence of a proton gradient across the membrane. The catalytic sites are hosted primarily by the beta subunits. This chain is ATP synthase subunit beta, chloroplastic, found in Chlorella vulgaris (Green alga).